Consider the following 166-residue polypeptide: Lipoprotein signal peptidase (166 aa).

Helical transmembrane passes span Leu10–Val30, Trp68–Leu88, and Gly94–Ile114. Catalysis depends on residues Asp124 and Asp142. The chain crosses the membrane as a helical span at residues Phe138 to Phe158.

This sequence belongs to the peptidase A8 family.

Its subcellular location is the cell inner membrane. The catalysed reaction is Release of signal peptides from bacterial membrane prolipoproteins. Hydrolyzes -Xaa-Yaa-Zaa-|-(S,diacylglyceryl)Cys-, in which Xaa is hydrophobic (preferably Leu), and Yaa (Ala or Ser) and Zaa (Gly or Ala) have small, neutral side chains.. It functions in the pathway protein modification; lipoprotein biosynthesis (signal peptide cleavage). In terms of biological role, this protein specifically catalyzes the removal of signal peptides from prolipoproteins. This Xanthomonas oryzae pv. oryzae (strain MAFF 311018) protein is Lipoprotein signal peptidase.